Here is a 100-residue protein sequence, read N- to C-terminus: Large ribosomal subunit protein uL23 (100 aa).

It belongs to the universal ribosomal protein uL23 family. In terms of assembly, part of the 50S ribosomal subunit. Contacts protein L29, and trigger factor when it is bound to the ribosome.

Its function is as follows. One of the early assembly proteins it binds 23S rRNA. One of the proteins that surrounds the polypeptide exit tunnel on the outside of the ribosome. Forms the main docking site for trigger factor binding to the ribosome. This is Large ribosomal subunit protein uL23 from Aeromonas hydrophila subsp. hydrophila (strain ATCC 7966 / DSM 30187 / BCRC 13018 / CCUG 14551 / JCM 1027 / KCTC 2358 / NCIMB 9240 / NCTC 8049).